The sequence spans 917 residues: Translation initiation factor IF-2 (917 aa).

The interval M1–T312 is disordered. Residues T20 to A30 show a composition bias toward basic residues. A compositionally biased stretch (polar residues) spans P41–S59. Composition is skewed to basic and acidic residues over residues S60 to R76 and R95 to E118. 3 stretches are compositionally biased toward gly residues: residues S132–Q141, Q167–G256, and A281–G293. Over residues R297–T312 the composition is skewed to basic and acidic residues. The region spanning T414–K587 is the tr-type G domain. The tract at residues G423–T430 is G1. Position 423 to 430 (G423 to T430) interacts with GTP. A G2 region spans residues G448 to H452. Residues D469–G472 form a G3 region. GTP is bound by residues D469–H473 and N523–D526. The segment at N523–D526 is G4. The tract at residues S559–K561 is G5.

Belongs to the TRAFAC class translation factor GTPase superfamily. Classic translation factor GTPase family. IF-2 subfamily.

The protein resides in the cytoplasm. Its function is as follows. One of the essential components for the initiation of protein synthesis. Protects formylmethionyl-tRNA from spontaneous hydrolysis and promotes its binding to the 30S ribosomal subunits. Also involved in the hydrolysis of GTP during the formation of the 70S ribosomal complex. The polypeptide is Translation initiation factor IF-2 (Leptospira biflexa serovar Patoc (strain Patoc 1 / ATCC 23582 / Paris)).